Reading from the N-terminus, the 24-residue chain is VEQDPYEIVIKQLERAAQYMEISE.

Belongs to the Glu/Leu/Phe/Val dehydrogenases family. In terms of assembly, homohexamer.

Its subcellular location is the cytoplasm. It carries out the reaction L-glutamate + NAD(+) + H2O = 2-oxoglutarate + NH4(+) + NADH + H(+). It catalyses the reaction L-glutamate + NADP(+) + H2O = 2-oxoglutarate + NH4(+) + NADPH + H(+). The polypeptide is Glutamate dehydrogenase (gdhA) (Pyrococcus woesei).